Here is a 169-residue protein sequence, read N- to C-terminus: UPF0303 protein BMEI0598 (169 aa).

It belongs to the UPF0303 family.

The chain is UPF0303 protein BMEI0598 from Brucella melitensis biotype 1 (strain ATCC 23456 / CCUG 17765 / NCTC 10094 / 16M).